The primary structure comprises 306 residues: Maltose operon periplasmic protein (306 aa).

The or 26 signal peptide spans 1–22; it reads MKMNKSLIVLCLSAGLLASAPG.

This sequence to S.typhimurium MalM.

The protein resides in the periplasm. Its function is as follows. Not yet known. Might function in the uptake of a still unidentified substrate. In Escherichia coli (strain K12), this protein is Maltose operon periplasmic protein (malM).